The sequence spans 142 residues: Ribosome maturation factor RimP (142 aa).

The protein belongs to the RimP family.

The protein resides in the cytoplasm. Functionally, required for maturation of 30S ribosomal subunits. The sequence is that of Ribosome maturation factor RimP from Nitratiruptor sp. (strain SB155-2).